Here is a 168-residue protein sequence, read N- to C-terminus: HTH-type transcriptional regulator IscR (168 aa).

In terms of domain architecture, HTH rrf2-type spans 2–131 (KLTSKGRYAV…NNITLGELMS (130 aa)). Residues 28-51 (LADISERQGISLSYLEQLFSKLRK) constitute a DNA-binding region (H-T-H motif). 3 residues coordinate [2Fe-2S] cluster: C92, C98, and C104.

Requires [2Fe-2S] cluster as cofactor.

Its function is as follows. Regulates the transcription of several operons and genes involved in the biogenesis of Fe-S clusters and Fe-S-containing proteins. In Vibrio vulnificus (strain CMCP6), this protein is HTH-type transcriptional regulator IscR.